The sequence spans 57 residues: COP9 signalosome complex subunit 9 (57 aa).

Belongs to the CSN9 family. In terms of assembly, component of the CSN complex, probably composed of cops1, cops2, cops3, cops4, cops5, cops6, cops7, cops8 and cops9.

The protein localises to the nucleus. The protein resides in the cytoplasm. It localises to the nucleoplasm. Functionally, component of the COP9 signalosome complex (CSN), a complex involved in various cellular and developmental processes. The CSN complex is an essential regulator of the ubiquitin (Ubl) conjugation pathway by mediating the deneddylation of the cullin subunits of SCF-type E3 ligase complexes, leading to decrease the Ubl ligase activity. May play a role in cell proliferation. The sequence is that of COP9 signalosome complex subunit 9 from Danio rerio (Zebrafish).